Consider the following 411-residue polypeptide: Serpin A3-2 (411 aa).

The signal sequence occupies residues 1–24; the sequence is MRAERTSFLLALGLLVAGIRSVHC. Residues N100, N180, N230, and N264 are each glycosylated (N-linked (GlcNAc...) asparagine).

This sequence belongs to the serpin family. In terms of assembly, homodimer.

It localises to the cytoplasmic vesicle. The protein resides in the secretory vesicle. Its subcellular location is the chromaffin granule. It is found in the secreted. Serine protease inhibitor. The protein is Serpin A3-2 of Bos taurus (Bovine).